Consider the following 267-residue polypeptide: 3-deoxy-manno-octulosonate cytidylyltransferase (267 aa).

It belongs to the KdsB family.

It is found in the cytoplasm. It carries out the reaction 3-deoxy-alpha-D-manno-oct-2-ulosonate + CTP = CMP-3-deoxy-beta-D-manno-octulosonate + diphosphate. It functions in the pathway nucleotide-sugar biosynthesis; CMP-3-deoxy-D-manno-octulosonate biosynthesis; CMP-3-deoxy-D-manno-octulosonate from 3-deoxy-D-manno-octulosonate and CTP: step 1/1. It participates in bacterial outer membrane biogenesis; lipopolysaccharide biosynthesis. Functionally, activates KDO (a required 8-carbon sugar) for incorporation into bacterial lipopolysaccharide in Gram-negative bacteria. The protein is 3-deoxy-manno-octulosonate cytidylyltransferase of Paraburkholderia phymatum (strain DSM 17167 / CIP 108236 / LMG 21445 / STM815) (Burkholderia phymatum).